Here is a 495-residue protein sequence, read N- to C-terminus: UDP-glycosyltransferase 73C11 (495 aa).

Catalysis depends on histidine 24, which acts as the Proton acceptor. Residue histidine 24 coordinates an anthocyanidin. Aspartate 129 (charge relay) is an active-site residue. Glutamine 358, histidine 373, tryptophan 376, asparagine 377, serine 378, and glutamate 381 together coordinate UDP-alpha-D-glucose. Glycine 396 is a binding site for an anthocyanidin. Aspartate 397 and glutamine 398 together coordinate UDP-alpha-D-glucose.

This sequence belongs to the UDP-glycosyltransferase family.

The catalysed reaction is oleanolate + UDP-alpha-D-glucose = oleanolate 3-O-beta-D-glucoside + UDP + H(+). Functionally, catalyzes the transfer of a glucose (Glc) moiety from UDP-Glc to the C-3 position of the oleanane sapogenins oleanolate and hederagenin, and to the C-28 carboxylic group of the lupane sapogenin betulinate. The monoglucosylated hederagenin 3-O-beta-D-glucoside is a feeding deterrent of the yellow-striped flea beetle (Phyllotreta nemorum). This chain is UDP-glycosyltransferase 73C11, found in Barbarea vulgaris (Yellow rocket).